Here is an 876-residue protein sequence, read N- to C-terminus: Exonuclease mut-7 homolog (876 aa).

Positions 517 to 571 constitute a 3'-5' exonuclease domain; that stretch reads GLSLLVQQVLGTALDKTQQLSNWDRRPLCEEQVIYAAADAYCLLEVHQALCREPA. Disordered regions lie at residues 578-607 and 751-781; these read DLAGSRRPRHRERPGARKPPGLQKASAPAA and SHQEGPRSSGDEATQSQAVQEPGPAPDAAPE.

This sequence belongs to the mut-7 family. It depends on Mg(2+) as a cofactor.

Possesses 3'-5' exoribonuclease activity. Required for 3'-end trimming of AGO1-bound miRNAs. This Homo sapiens (Human) protein is Exonuclease mut-7 homolog (EXD3).